A 370-amino-acid chain; its full sequence is DNA replication and repair protein RecF (370 aa).

Position 30–37 (30–37 (GENAQGKT)) interacts with ATP.

It belongs to the RecF family.

It is found in the cytoplasm. In terms of biological role, the RecF protein is involved in DNA metabolism; it is required for DNA replication and normal SOS inducibility. RecF binds preferentially to single-stranded, linear DNA. It also seems to bind ATP. The sequence is that of DNA replication and repair protein RecF from Listeria welshimeri serovar 6b (strain ATCC 35897 / DSM 20650 / CCUG 15529 / CIP 8149 / NCTC 11857 / SLCC 5334 / V8).